A 75-amino-acid chain; its full sequence is UPF0235 protein Ava_3894 (75 aa).

The tract at residues 1-32 (MQKKVKVKPNSKQQKIAEQDDGSLTVHLKSPP) is disordered.

Belongs to the UPF0235 family.

In Trichormus variabilis (strain ATCC 29413 / PCC 7937) (Anabaena variabilis), this protein is UPF0235 protein Ava_3894.